The sequence spans 314 residues: tRNA dimethylallyltransferase (314 aa).

10 to 17 is an ATP binding site; the sequence is GPTAVGKT. 12-17 is a substrate binding site; that stretch reads TAVGKT. 4 interaction with substrate tRNA regions span residues 35–38, 160–164, 239–244, and 272–279; these read DSMQ, RRVIR, QAIGYK, and KRQLTWFR.

It belongs to the IPP transferase family. In terms of assembly, monomer. It depends on Mg(2+) as a cofactor.

It catalyses the reaction adenosine(37) in tRNA + dimethylallyl diphosphate = N(6)-dimethylallyladenosine(37) in tRNA + diphosphate. Its function is as follows. Catalyzes the transfer of a dimethylallyl group onto the adenine at position 37 in tRNAs that read codons beginning with uridine, leading to the formation of N6-(dimethylallyl)adenosine (i(6)A). The protein is tRNA dimethylallyltransferase (miaA) of Halalkalibacterium halodurans (strain ATCC BAA-125 / DSM 18197 / FERM 7344 / JCM 9153 / C-125) (Bacillus halodurans).